Reading from the N-terminus, the 189-residue chain is Dynactin subunit 6 (189 aa).

Belongs to the dynactin subunits 5/6 family. Dynactin subunit 6 subfamily. As to quaternary structure, subunit of dynactin, a multiprotein complex part of a tripartite complex with dynein and a adapter, such as BICDL1, BICD2 or HOOK3. The dynactin complex is built around ACTR1A/ACTB filament and consists of an actin-related filament composed of a shoulder domain, a pointed end and a barbed end.

It is found in the cytoplasm. The protein localises to the cytoskeleton. In terms of biological role, part of the dynactin complex that activates the molecular motor dynein for ultra-processive transport along microtubules. The protein is Dynactin subunit 6 (dynF) of Dictyostelium discoideum (Social amoeba).